The following is a 382-amino-acid chain: Porphobilinogen deaminase, chloroplastic (382 aa).

A chloroplast-targeting transit peptide spans 1-62 (MDIASSSLSQ…KQSSSGFVKA (62 aa)). Arg80 and Ser82 together coordinate dipyrromethane. Ser123 bears the Phosphoserine mark. Dipyrromethane-binding positions include 156 to 157 (KD), 200 to 206 (TASLRRK), and 223 to 229 (RGNVQTR). Asp157 functions as the Proton donor/acceptor in the catalytic mechanism. Cys316 bears the S-(dipyrrolylmethanemethyl)cysteine mark.

This sequence belongs to the HMBS family. In terms of assembly, monomer. The cofactor is dipyrromethane.

The protein resides in the plastid. The protein localises to the chloroplast. It carries out the reaction 4 porphobilinogen + H2O = hydroxymethylbilane + 4 NH4(+). It participates in porphyrin-containing compound metabolism; protoporphyrin-IX biosynthesis; coproporphyrinogen-III from 5-aminolevulinate: step 2/4. Its pathway is porphyrin-containing compound metabolism; chlorophyll biosynthesis. Inhibited by NH(3), heavy-metal ions, hydroxylamine and 2-bromoporphobilinogen. Not inhibited by N-ethylmaleimide. Its function is as follows. Tetrapolymerization of the monopyrrole PBG into the hydroxymethylbilane pre-uroporphyrinogen in several discrete steps. This Arabidopsis thaliana (Mouse-ear cress) protein is Porphobilinogen deaminase, chloroplastic (HEMC).